The primary structure comprises 271 residues: Extracellular metalloprotease TRV_06892 (271 aa).

Residues 1–19 form the signal peptide; that stretch reads MRFSVLLTGLAAAGSIATA. Residue Asn136 is glycosylated (N-linked (GlcNAc...) asparagine). Residue His185 coordinates Zn(2+). The active site involves Glu186. His189 contacts Zn(2+). N-linked (GlcNAc...) asparagine glycosylation is present at Asn200. Cys222 and Cys248 are joined by a disulfide.

This sequence belongs to the peptidase M43B family.

It localises to the secreted. Functionally, secreted metalloproteinase that allows assimilation of proteinaceous substrates. Plays a pivotal role as a pathogenicity determinant during infections and contributes to the ability of the pathogen to persist within the mammalian host. In Trichophyton verrucosum (strain HKI 0517), this protein is Extracellular metalloprotease TRV_06892.